Reading from the N-terminus, the 261-residue chain is MHFEVHGRTDAEAPTILLSSGLGGSSAYWLPQIEALSDHFRIVTYDHRGTGRTGGEVPTEGGISAMADDVLEIVSALNLEKFHFMGHALGGLIGLDIALRQPRLIDRLVLINAWSKADPHSGRCFDVRIELLEKSGVDAFVKAQPLFLYPAAWMSEHQERLARDDAHGVAHFQGKTNVLRRIAALRAFDIDARLGEIGNPVLVVATKDDLLVPYTRSLRLAEGLPQSELCLLDFGAHAVNITEPDLFNTRLLQFLLPADQT.

The AB hydrolase-1 domain occupies 14–119 (PTILLSSGLG…LINAWSKADP (106 aa)).

It belongs to the AB hydrolase superfamily. Hydrolase RutD family.

The catalysed reaction is carbamate + 2 H(+) = NH4(+) + CO2. Functionally, involved in pyrimidine catabolism. May facilitate the hydrolysis of carbamate, a reaction that can also occur spontaneously. This Agrobacterium fabrum (strain C58 / ATCC 33970) (Agrobacterium tumefaciens (strain C58)) protein is Putative carbamate hydrolase RutD.